Here is a 61-residue protein sequence, read N- to C-terminus: Toxin S5C1 (61 aa).

Intrachain disulfides connect Cys-3–Cys-22, Cys-16–Cys-39, Cys-41–Cys-53, and Cys-54–Cys-59. The Cell attachment site signature appears at 45–47 (RGD).

The protein belongs to the three-finger toxin family. Short-chain subfamily. Antiplatelet toxin sub-subfamily. Expressed by the venom gland.

It is found in the secreted. Inhibits ADP-induced platelet aggregation and inhibits the binding of purified platelet fibrinogen receptor alpha-IIb/beta-3 (ITGA2B/ITGB3) to immobilized fibrinogen. This chain is Toxin S5C1, found in Dendroaspis jamesoni kaimosae (Eastern Jameson's mamba).